The following is a 479-amino-acid chain: D-hydantoinase/dihydropyrimidinase (479 aa).

Zn(2+) is bound by residues H59, H61, and K150. K150 carries the post-translational modification N6-carboxylysine. A substrate-binding site is contributed by Y155. The Zn(2+) site is built by H183 and H239. S289 lines the substrate pocket. D316 contributes to the Zn(2+) binding site. N337 provides a ligand contact to substrate.

This sequence belongs to the metallo-dependent hydrolases superfamily. Hydantoinase/dihydropyrimidinase family. In terms of assembly, homotetramer. It depends on Zn(2+) as a cofactor. Carboxylation allows a single lysine to coordinate two zinc ions.

The enzyme catalyses 5,6-dihydrouracil + H2O = 3-(carbamoylamino)propanoate + H(+). Functionally, catalyzes the hydrolysis of dihydropyrimidines and of the structurally related DL-5-mono-substituted hydantoins, to produce N-carbamoyl-D-amino acids. The protein is D-hydantoinase/dihydropyrimidinase (dht) of Pseudomonas aeruginosa (strain ATCC 15692 / DSM 22644 / CIP 104116 / JCM 14847 / LMG 12228 / 1C / PRS 101 / PAO1).